A 463-amino-acid chain; its full sequence is MKSILVKDIYRNTEKYAGQEIVIEGWIRTLRASKAFGFIEVNDGSFFKNIQVVFEEGLENFAEVSKLSISTAIIVKGKLEITPDAKQPFEIKATSIEVEGESDSDYPLQKKRHTFEFLREIAHLRPRSNTFSAVFRVRSLAAFAIHQFFQERGFVYTHTPIITGSDAEGAGEMFRITTLDPKNPGLNEAGEVDFTKDFFGKETSLTVSGQLQGEAYALAFRNIYTFGPTFRAENSHTARHASEFWMIEPEIAFADLQDNMELAEEMLKYIINYVMENAPEEMEFFNSFVDKGLLDRLNNVATSDFGRVTYTEAIEILQKSGETFEYPVAWGTDLQTEHERYLTEKVFKKPVFVTDYPKDIKAFYMKLNEDGKTVAAMDLLVPGIGEIIGGSQREDNLALLEERMDAMGLDKEEYWWYLELRKYGSARHAGYGLGFERAIMYLTGMSNIRDVISFPRTPKSAEF.

Belongs to the class-II aminoacyl-tRNA synthetase family. As to quaternary structure, homodimer.

The protein localises to the cytoplasm. The catalysed reaction is tRNA(Asn) + L-asparagine + ATP = L-asparaginyl-tRNA(Asn) + AMP + diphosphate + H(+). In Alkaliphilus oremlandii (strain OhILAs) (Clostridium oremlandii (strain OhILAs)), this protein is Asparagine--tRNA ligase.